A 147-amino-acid chain; its full sequence is D-aminoacyl-tRNA deacylase (147 aa).

Positions 136–137 match the Gly-cisPro motif, important for rejection of L-amino acids motif; it reads GP.

It belongs to the DTD family. Homodimer.

The protein localises to the cytoplasm. It catalyses the reaction glycyl-tRNA(Ala) + H2O = tRNA(Ala) + glycine + H(+). The catalysed reaction is a D-aminoacyl-tRNA + H2O = a tRNA + a D-alpha-amino acid + H(+). Functionally, an aminoacyl-tRNA editing enzyme that deacylates mischarged D-aminoacyl-tRNAs. Also deacylates mischarged glycyl-tRNA(Ala), protecting cells against glycine mischarging by AlaRS. Acts via tRNA-based rather than protein-based catalysis; rejects L-amino acids rather than detecting D-amino acids in the active site. By recycling D-aminoacyl-tRNA to D-amino acids and free tRNA molecules, this enzyme counteracts the toxicity associated with the formation of D-aminoacyl-tRNA entities in vivo and helps enforce protein L-homochirality. This is D-aminoacyl-tRNA deacylase from Streptococcus pneumoniae serotype 4 (strain ATCC BAA-334 / TIGR4).